The sequence spans 314 residues: N-acyl-aromatic-L-amino acid amidohydrolase (carboxylate-forming) B (314 aa).

Positions 19 and 22 each coordinate Zn(2+). Substrate contacts are provided by residues R63 and N70 to R71. H116 is a binding site for Zn(2+). Substrate contacts are provided by E178 and Y289.

This sequence belongs to the AspA/AstE family. Aspartoacylase subfamily. Homotetramer. Zn(2+) serves as cofactor.

Its subcellular location is the apical cell membrane. It localises to the cytoplasm. It carries out the reaction an N-acyl-aromatic L-alpha-amino acid + H2O = an aromatic L-alpha-amino acid + a carboxylate. The catalysed reaction is an N-acetyl-L-cysteine-S-conjugate + H2O = an S-substituted L-cysteine + acetate. Its function is as follows. Plays an important role in deacetylating mercapturic acids in kidney proximal tubules. The polypeptide is N-acyl-aromatic-L-amino acid amidohydrolase (carboxylate-forming) B (acy3.2) (Danio rerio (Zebrafish)).